Consider the following 914-residue polypeptide: Chlorate reductase subunit alpha (914 aa).

The tat-type signal signal peptide spans 1-32 (MNSPDEHNGRRRFLQFSAAALASAAASPSLWA). A 4Fe-4S Mo/W bis-MGD-type domain is found at 62 to 125 (DSVGVMTHSN…VYCSWSKQPD (64 aa)). [4Fe-4S] cluster contacts are provided by His69, Cys73, Cys77, and Cys111. Asp205 is a binding site for Mo-bis(molybdopterin guanine dinucleotide).

Belongs to the prokaryotic molybdopterin-containing oxidoreductase family. In terms of assembly, heterotrimer of alpha, beta and gamma subunits. The cofactor is [4Fe-4S] cluster. Mo-bis(molybdopterin guanine dinucleotide) serves as cofactor. In terms of processing, predicted to be exported by the Tat system. The position of the signal peptide cleavage has not been experimentally proven.

It localises to the periplasm. It catalyses the reaction chlorate + AH2 = chlorite + A + H2O. Functionally, terminal reductase that allows anaerobic growth on chlorate as the sole respiratory oxidant. The polypeptide is Chlorate reductase subunit alpha (clrA) (Ideonella dechloratans).